The following is a 543-amino-acid chain: Alanine aminotransferase 1, mitochondrial (543 aa).

A mitochondrion-targeting transit peptide spans 1–55 (MRRFVIGQAKNLIDQSRRRQLHHHKNLSFVSLIPPFSAPSDSSSRHLSSSSSSDM). Residues 43-63 (SSRHLSSSSSSDMSASDSSSS) show a composition bias toward low complexity. Positions 43–64 (SSRHLSSSSSSDMSASDSSSSL) are disordered. Ser56 carries the N-acetylserine modification. Pyridoxal 5'-phosphate contacts are provided by residues Tyr173, 209–210 (AS), Tyr235, Asn291, Tyr322, and 354–356 (SFQ). Residue Lys360 is modified to N6-(pyridoxal phosphate)lysine. Arg369 and Asn397 together coordinate pyridoxal 5'-phosphate.

The protein belongs to the class-I pyridoxal-phosphate-dependent aminotransferase family. Alanine aminotransferase subfamily. In terms of assembly, homodimer. Requires pyridoxal 5'-phosphate as cofactor. Post-translationally, the N-terminus is blocked. As to expression, mostly expressed in roots and shoots, mostly in vascular tissues, and, to a lower extent, in flowers and leaves.

Its subcellular location is the mitochondrion. The catalysed reaction is L-alanine + 2-oxoglutarate = pyruvate + L-glutamate. The protein operates within photosynthesis; C4 acid pathway. It functions in the pathway amino-acid degradation; L-alanine degradation via transaminase pathway; pyruvate from L-alanine: step 1/1. Its function is as follows. Is the major alanine aminotransferase in roots that catalyzes the conversion of alanine to pyruvate. Involved in the rapid conversion of alanine to pyruvate during recovery from low-oxygen stress. This chain is Alanine aminotransferase 1, mitochondrial, found in Arabidopsis thaliana (Mouse-ear cress).